A 203-amino-acid chain; its full sequence is MSIKYVATSKLPTPWGVFAMHGFEDTETGKEHVALTFGTLSADEPVLGRIHSECLTGDALFSLRCDCGFQLQTAMQNIAETGCGFILYLRQEGRGIGLLNKIRAYELQDKGANTVEANEQLGFPADMRKYDMIKPMLEQIGVKHVRLMTNNPRKVKAMKEFGIEVVERVPLQVGKNRYNEAYLKTKSTELGHMMSEYHFVDED.

49–53 contributes to the GTP binding site; that stretch reads RIHSE. 3 residues coordinate Zn(2+): cysteine 54, cysteine 65, and cysteine 67. Residues glutamine 70, 92–94, and threonine 114 each bind GTP; that span reads EGR. The Proton acceptor role is filled by aspartate 126. Catalysis depends on arginine 128, which acts as the Nucleophile. Residues threonine 149 and lysine 154 each contribute to the GTP site.

The protein belongs to the GTP cyclohydrolase II family. Requires Zn(2+) as cofactor.

The enzyme catalyses GTP + 4 H2O = 2,5-diamino-6-hydroxy-4-(5-phosphoribosylamino)-pyrimidine + formate + 2 phosphate + 3 H(+). Its pathway is cofactor biosynthesis; riboflavin biosynthesis; 5-amino-6-(D-ribitylamino)uracil from GTP: step 1/4. Its function is as follows. Catalyzes the conversion of GTP to 2,5-diamino-6-ribosylamino-4(3H)-pyrimidinone 5'-phosphate (DARP), formate and pyrophosphate. In Shewanella sp. (strain W3-18-1), this protein is GTP cyclohydrolase-2.